A 1116-amino-acid polypeptide reads, in one-letter code: Disease resistance protein RGA5 (1116 aa).

Residues 1–177 (MDAPASFSLG…HHGVSANLVG (177 aa)) are structured coiled coil (CC) domain. In terms of domain architecture, NB-ARC spans 182-466 (KTKLNRWLSD…WSAEGFVSAN (285 aa)). LRR repeat units lie at residues 608 to 631 (LFQL…ISGL), 633 to 653 (YLET…LVHL), 654 to 675 (PNLL…GCMR), 677 to 701 (LRTL…ELTN), 732 to 755 (LSNL…DISS), 786 to 808 (LHKL…DNLT), 810 to 830 (LPSL…RFIF), 835 to 857 (LPVL…AGAM), and 858 to 882 (PNLQ…LFGI). Residues 935 to 971 (EEESHPLEKQHHKREKGSSAGHGVLEKESVEDSEKNT) form a disordered region. Positions 958 to 971 (VLEKESVEDSEKNT) are enriched in basic and acidic residues. Residues 997–1066 (RTKIVVKVHM…KCGLAELLMV (70 aa)) enclose the HMA domain. Residues 1000-1070 (IVVKVHMPCG…AELLMVELVE (71 aa)) form an HMA-like domain region.

The protein belongs to the disease resistance NB-LRR family. In terms of assembly, forms homodimer or heterodimer with RGA4 through its coiled coil (CC) domain. Interacts with AVR1-Pia and AVR-CO39 through its C-terminal part containing the HMA-like domain. Expressed in leaves.

Its subcellular location is the cytoplasm. Disease resistance (R) protein that recognizes the AVR-Pia and AVR1-CO39 effector avirulence proteins from M.oryzae. Resistance proteins guard the plant against pathogens that contain an appropriate avirulence protein via an indirect interaction with this avirulence protein. That triggers a defense system including the hypersensitive response, which restricts the pathogen growth. Contribution of RGA4 is required to recognize the effector avirulence proteins AVR-Pia and AVR1-CO39 from M.oryzae. Acts as a repressor of the RGA4-mediated cell death activation. Upon infection, recognition and binding of the AVR effectors relieve the RGA5-mediated repression and triggers the hypersensitive response. Immune response triggered by the RGA4-RGA5 -mediated recognition of AVR1-CO39 confers resistance to X.oryzae pathovars. This is Disease resistance protein RGA5 from Oryza sativa subsp. japonica (Rice).